Here is a 205-residue protein sequence, read N- to C-terminus: Probable GTP-binding protein EngB (205 aa).

The EngB-type G domain maps to 29-203 (QGAEIAFIGR…KAVLSQWFRS (175 aa)). GTP contacts are provided by residues 37-44 (GRSNAGKS), 64-68 (GRTQM), 82-85 (DLPG), 149-152 (TKSD), and 182-184 (FSS). Mg(2+)-binding residues include Ser-44 and Thr-66.

The protein belongs to the TRAFAC class TrmE-Era-EngA-EngB-Septin-like GTPase superfamily. EngB GTPase family. Requires Mg(2+) as cofactor.

Necessary for normal cell division and for the maintenance of normal septation. In Coxiella burnetii (strain RSA 493 / Nine Mile phase I), this protein is Probable GTP-binding protein EngB.